Here is a 217-residue protein sequence, read N- to C-terminus: uncharacterized protein (217 aa).

This is an uncharacterized protein from Methanocaldococcus jannaschii (strain ATCC 43067 / DSM 2661 / JAL-1 / JCM 10045 / NBRC 100440) (Methanococcus jannaschii).